The sequence spans 277 residues: Uridine-cytidine kinase 1 (277 aa).

The interval 1–30 (MASAGGEDCESPAPEADRPHQRPFLIGVSG) is disordered. Residue 30–38 (GGTASGKST) coordinates ATP. D65 is an active-site residue. D87, Y115, H120, R169, R178, and Q186 together coordinate substrate. D215 is a binding site for ATP. Positions 247-277 (SYKRTFSEPGDHPGMLTSGKRSHLESSSRPH) are disordered. T251 carries the post-translational modification Phosphothreonine. S253 is modified (phosphoserine). Residues 268-277 (SHLESSSRPH) are compositionally biased toward basic and acidic residues.

The protein belongs to the uridine kinase family. As to expression, ubiquitous.

The enzyme catalyses uridine + ATP = UMP + ADP + H(+). It carries out the reaction cytidine + ATP = CMP + ADP + H(+). It participates in pyrimidine metabolism; CTP biosynthesis via salvage pathway; CTP from cytidine: step 1/3. The protein operates within pyrimidine metabolism; UMP biosynthesis via salvage pathway; UMP from uridine: step 1/1. In terms of biological role, phosphorylates uridine and cytidine to uridine monophosphate and cytidine monophosphate. Does not phosphorylate deoxyribonucleosides or purine ribonucleosides. Can use ATP or GTP as a phosphate donor. Can also phosphorylate cytidine and uridine nucleoside analogs such as 6-azauridine, 5-fluorouridine, 4-thiouridine, 5-bromouridine, N(4)-acetylcytidine, N(4)-benzoylcytidine, 5-fluorocytidine, 2-thiocytidine, 5-methylcytidine, and N(4)-anisoylcytidine. In Homo sapiens (Human), this protein is Uridine-cytidine kinase 1 (UCK1).